Consider the following 382-residue polypeptide: Galactokinase (382 aa).

34 to 37 is a substrate binding site; sequence EHTD. 124–130 provides a ligand contact to ATP; the sequence is GAGLSSS. Residues Ser130 and Glu162 each coordinate Mg(2+). The active-site Proton acceptor is the Asp174. Position 223 (Tyr223) interacts with substrate.

The protein belongs to the GHMP kinase family. GalK subfamily.

It is found in the cytoplasm. It carries out the reaction alpha-D-galactose + ATP = alpha-D-galactose 1-phosphate + ADP + H(+). It participates in carbohydrate metabolism; galactose metabolism. Its function is as follows. Catalyzes the transfer of the gamma-phosphate of ATP to D-galactose to form alpha-D-galactose-1-phosphate (Gal-1-P). The polypeptide is Galactokinase (Shigella boydii serotype 4 (strain Sb227)).